We begin with the raw amino-acid sequence, 348 residues long: RNA 3'-terminal phosphate cyclase (348 aa).

ATP-binding positions include Q101 and 286 to 289 (HMAD). The active-site Tele-AMP-histidine intermediate is H312.

Belongs to the RNA 3'-terminal cyclase family. Type 1 subfamily.

The protein localises to the cytoplasm. The catalysed reaction is a 3'-end 3'-phospho-ribonucleotide-RNA + ATP = a 3'-end 2',3'-cyclophospho-ribonucleotide-RNA + AMP + diphosphate. Catalyzes the conversion of 3'-phosphate to a 2',3'-cyclic phosphodiester at the end of RNA. The mechanism of action of the enzyme occurs in 3 steps: (A) adenylation of the enzyme by ATP; (B) transfer of adenylate to an RNA-N3'P to produce RNA-N3'PP5'A; (C) and attack of the adjacent 2'-hydroxyl on the 3'-phosphorus in the diester linkage to produce the cyclic end product. The biological role of this enzyme is unknown but it is likely to function in some aspects of cellular RNA processing. In Pyrobaculum aerophilum (strain ATCC 51768 / DSM 7523 / JCM 9630 / CIP 104966 / NBRC 100827 / IM2), this protein is RNA 3'-terminal phosphate cyclase.